Reading from the N-terminus, the 108-residue chain is Small ribosomal subunit protein bS6 (108 aa).

This sequence belongs to the bacterial ribosomal protein bS6 family.

Its function is as follows. Binds together with bS18 to 16S ribosomal RNA. The sequence is that of Small ribosomal subunit protein bS6 from Nostoc sp. (strain PCC 7120 / SAG 25.82 / UTEX 2576).